The sequence spans 403 residues: Rhomboid-like protein 15 (403 aa).

5 helical membrane passes run 22–42 (IPFL…ICLL), 70–90 (AIIF…LVPM), 103–123 (LLYL…LIAS), 141–161 (AIGF…LSGV), and 176–196 (LYPW…SLLG). Catalysis depends on Ser145, which acts as the Nucleophile. The active-site Charge relay system is the His197. A helical transmembrane segment spans residues 198–218 (LCGILSGFSYSYGLFNFLMPG). The interval 282–316 (EASNQSSEDSRFPGRGRTLSTARDPTAPAGETDPN) is disordered. A UBA domain is found at 361 to 401 (AASEEQIQKLVAMGFDRTQVEVALAAADDDLTVAVEILMSQ).

The protein belongs to the peptidase S54 family.

Its subcellular location is the membrane. Probable rhomboid-type serine protease that catalyzes intramembrane proteolysis. May function in senescence. The sequence is that of Rhomboid-like protein 15 from Arabidopsis thaliana (Mouse-ear cress).